The following is a 333-amino-acid chain: Glyceraldehyde-3-phosphate dehydrogenase (333 aa).

Residues 11-12, aspartate 33, arginine 78, and serine 120 each bind NAD(+); that span reads RI. Residues 149–151, threonine 180, 209–210, and arginine 232 each bind D-glyceraldehyde 3-phosphate; these read SCT and TG. The Nucleophile role is filled by cysteine 150. At cysteine 150 the chain carries S-nitrosocysteine. Residue asparagine 314 participates in NAD(+) binding.

Belongs to the glyceraldehyde-3-phosphate dehydrogenase family. Homotetramer. Post-translationally, S-nitrosylation of Cys-150 leads to translocation to the nucleus.

The protein localises to the cytoplasm. Its subcellular location is the cytosol. The protein resides in the cytoskeleton. It is found in the nucleus. The enzyme catalyses D-glyceraldehyde 3-phosphate + phosphate + NAD(+) = (2R)-3-phospho-glyceroyl phosphate + NADH + H(+). It carries out the reaction S-nitroso-L-cysteinyl-[GAPDH] + L-cysteinyl-[protein] = L-cysteinyl-[GAPDH] + S-nitroso-L-cysteinyl-[protein]. It participates in carbohydrate degradation; glycolysis; pyruvate from D-glyceraldehyde 3-phosphate: step 1/5. In terms of biological role, has both glyceraldehyde-3-phosphate dehydrogenase and nitrosylase activities, thereby playing a role in glycolysis and nuclear functions, respectively. Glyceraldehyde-3-phosphate dehydrogenase is a key enzyme in glycolysis that catalyzes the first step of the pathway by converting D-glyceraldehyde 3-phosphate (G3P) into 3-phospho-D-glyceroyl phosphate. Participates in nuclear events including transcription, RNA transport, DNA replication and apoptosis. Nuclear functions are probably due to the nitrosylase activity that mediates cysteine S-nitrosylation of nuclear target proteins such as SIRT1, HDAC2 and PRKDC. This Danio rerio (Zebrafish) protein is Glyceraldehyde-3-phosphate dehydrogenase.